The following is a 320-amino-acid chain: Thioredoxin reductase (320 aa).

Residue 36 to 43 (TGMEQGGQ) coordinates FAD. The cysteines at positions 136 and 139 are disulfide-linked. 287–296 (DVTDHVYRQA) contributes to the FAD binding site.

This sequence belongs to the class-II pyridine nucleotide-disulfide oxidoreductase family. As to quaternary structure, homodimer. FAD serves as cofactor.

It localises to the cytoplasm. It catalyses the reaction [thioredoxin]-dithiol + NADP(+) = [thioredoxin]-disulfide + NADPH + H(+). The chain is Thioredoxin reductase (trxB) from Coxiella burnetii (strain RSA 493 / Nine Mile phase I).